The following is a 230-amino-acid chain: Mediator of RNA polymerase II transcription subunit 7 (230 aa).

Disordered stretches follow at residues 1–22 (MSRE…PPPP) and 206–230 (QSQS…SDSQ).

This sequence belongs to the Mediator complex subunit 7 family. In terms of assembly, component of the Mediator complex.

The protein localises to the nucleus. Component of the Mediator complex, a coactivator involved in the regulated transcription of nearly all RNA polymerase II-dependent genes. Mediator functions as a bridge to convey information from gene-specific regulatory proteins to the basal RNA polymerase II transcription machinery. Mediator is recruited to promoters by direct interactions with regulatory proteins and serves as a scaffold for the assembly of a functional preinitiation complex with RNA polymerase II and the general transcription factors. This is Mediator of RNA polymerase II transcription subunit 7 (MED7) from Candida glabrata (strain ATCC 2001 / BCRC 20586 / JCM 3761 / NBRC 0622 / NRRL Y-65 / CBS 138) (Yeast).